A 143-amino-acid chain; its full sequence is Ayaconin (143 aa).

A signal peptide spans Met1–Ala22.

Interacts with human F12 (inactive). As to expression, salivary gland.

It localises to the secreted. Inhibits the intrinsic blood coagulation pathway in the host by blocking activation of host coagulation factor XII (F12). This is Ayaconin from Lutzomyia ayacuchensis (Sand fly).